The sequence spans 190 residues: dITP/XTP pyrophosphatase (190 aa).

7–12 (SNNKNK) is a binding site for substrate. Catalysis depends on aspartate 68, which acts as the Proton acceptor. Residue aspartate 68 participates in Mg(2+) binding. Residues threonine 69, 148 to 151 (FGYD), lysine 171, and 176 to 177 (HR) contribute to the substrate site.

This sequence belongs to the HAM1 NTPase family. In terms of assembly, homodimer. The cofactor is Mg(2+).

It carries out the reaction XTP + H2O = XMP + diphosphate + H(+). The enzyme catalyses dITP + H2O = dIMP + diphosphate + H(+). It catalyses the reaction ITP + H2O = IMP + diphosphate + H(+). Its function is as follows. Pyrophosphatase that catalyzes the hydrolysis of nucleoside triphosphates to their monophosphate derivatives, with a high preference for the non-canonical purine nucleotides XTP (xanthosine triphosphate), dITP (deoxyinosine triphosphate) and ITP. Seems to function as a house-cleaning enzyme that removes non-canonical purine nucleotides from the nucleotide pool, thus preventing their incorporation into DNA/RNA and avoiding chromosomal lesions. The protein is dITP/XTP pyrophosphatase of Flavobacterium psychrophilum (strain ATCC 49511 / DSM 21280 / CIP 103535 / JIP02/86).